We begin with the raw amino-acid sequence, 441 residues long: Ribosomal protein uS12 methylthiotransferase RimO (441 aa).

The MTTase N-terminal domain occupies 8–118 (PKIGFVSLGC…VLEHVHHYVP (111 aa)). Positions 17, 53, 82, 150, 154, and 157 each coordinate [4Fe-4S] cluster. The Radical SAM core domain occupies 136 to 373 (LTPRHYAYLK…MQLQQQISAE (238 aa)). Positions 376–441 (QEKVGREILV…DEYDLWGSRV (66 aa)) constitute a TRAM domain.

It belongs to the methylthiotransferase family. RimO subfamily. [4Fe-4S] cluster is required as a cofactor.

Its subcellular location is the cytoplasm. The catalysed reaction is L-aspartate(89)-[ribosomal protein uS12]-hydrogen + (sulfur carrier)-SH + AH2 + 2 S-adenosyl-L-methionine = 3-methylsulfanyl-L-aspartate(89)-[ribosomal protein uS12]-hydrogen + (sulfur carrier)-H + 5'-deoxyadenosine + L-methionine + A + S-adenosyl-L-homocysteine + 2 H(+). Functionally, catalyzes the methylthiolation of an aspartic acid residue of ribosomal protein uS12. This Citrobacter koseri (strain ATCC BAA-895 / CDC 4225-83 / SGSC4696) protein is Ribosomal protein uS12 methylthiotransferase RimO.